The chain runs to 211 residues: Metalloproteinase inhibitor 3 (211 aa).

The signal sequence occupies residues 1 to 23 (MTPWLGLIVLLGSWSLGDWGAEA). Cysteine 24 contributes to the Zn(2+) binding site. Involved in metalloproteinase-binding regions lie at residues 24–27 (CTCS) and 88–89 (ES). Intrachain disulfides connect cysteine 24–cysteine 91, cysteine 26–cysteine 118, cysteine 36–cysteine 143, cysteine 145–cysteine 192, cysteine 150–cysteine 155, and cysteine 163–cysteine 184. Positions 24-143 (CTCSPSHPQD…GLNYRYHLGC (120 aa)) constitute an NTR domain. The segment at 105-188 (TGRVYDGKMY…SKHYACIRQK (84 aa)) is mediates interaction with EFEMP1. Asparagine 207 carries an N-linked (GlcNAc...) asparagine glycan.

Belongs to the protease inhibitor I35 (TIMP) family. As to quaternary structure, interacts with EFEMP1. Interacts with KDR.

Its subcellular location is the secreted. It is found in the extracellular space. The protein resides in the extracellular matrix. Mediates a variety of processes including matrix regulation and turnover, inflammation, and angiogenesis, through reversible inhibition of zinc protease superfamily enzymes, primarily matrix metalloproteinases (MMPs). Regulates extracellular matrix (ECM) remodeling through inhibition of matrix metalloproteinases (MMP) including MMP-1, MMP-2, MMP-3, MMP-7, MMP-9, MMP-13, MMP-14 and MMP-15. Additionally, modulates the processing of amyloid precursor protein (APP) and apolipoprotein E receptor ApoER2 by inhibiting two alpha-secretases ADAM10 and ADAM17. Functions as a tumor suppressor and a potent inhibitor of angiogenesis. Exerts its anti-angiogenic effect by directly interacting with vascular endothelial growth factor (VEGF) receptor-2/KDR, preventing its binding to the VEGFA ligand. Selectively induces apoptosis in angiogenic endothelial cells through a caspase-independent cell death pathway. Mechanistically, inhibits matrix-induced focal adhesion kinase PTK2 tyrosine phosphorylation and association with paxillin/PXN and disrupts the incorporation of ITGB3, PTK2 and PXN into focal adhesion contacts on the matrix. The protein is Metalloproteinase inhibitor 3 (TIMP3) of Macaca mulatta (Rhesus macaque).